Consider the following 211-residue polypeptide: ATP phosphoribosyltransferase (211 aa).

It belongs to the ATP phosphoribosyltransferase family. Short subfamily. Heteromultimer composed of HisG and HisZ subunits.

Its subcellular location is the cytoplasm. The catalysed reaction is 1-(5-phospho-beta-D-ribosyl)-ATP + diphosphate = 5-phospho-alpha-D-ribose 1-diphosphate + ATP. Its pathway is amino-acid biosynthesis; L-histidine biosynthesis; L-histidine from 5-phospho-alpha-D-ribose 1-diphosphate: step 1/9. Functionally, catalyzes the condensation of ATP and 5-phosphoribose 1-diphosphate to form N'-(5'-phosphoribosyl)-ATP (PR-ATP). Has a crucial role in the pathway because the rate of histidine biosynthesis seems to be controlled primarily by regulation of HisG enzymatic activity. This Hahella chejuensis (strain KCTC 2396) protein is ATP phosphoribosyltransferase.